We begin with the raw amino-acid sequence, 708 residues long: Potassium-transporting ATPase ATP-binding subunit 2 (708 aa).

The disordered stretch occupies residues 1–23; the sequence is MRSPSRLPHETRDSRQRTPKTDM. The segment covering 7-23 has biased composition (basic and acidic residues); sequence LPHETRDSRQRTPKTDM. Transmembrane regions (helical) follow at residues 49 to 69, 84 to 104, 235 to 255, and 283 to 303; these read MFIVWVGTIVTFLVTLNPNLF, GLITLILFFTVLFANFAEAVA, IALTVLLAVLTQVFLIVVATM, and SIAILISLLVALIPTTIGGLL. The active-site 4-aspartylphosphate intermediate is D339. Residues D376, E380, 407 to 414, and K426 contribute to the ATP site; that span reads FSAKTRMS. The Mg(2+) site is built by D549 and D553. 3 helical membrane passes run 619–639, 645–665, and 683–703; these read FAILPTIFGAAGIGALNIMGL, AIISALIYNALIIPALIPLAL, and IFIYGLGGIIAPFIAIKLIDV.

The protein belongs to the cation transport ATPase (P-type) (TC 3.A.3) family. Type IA subfamily. In terms of assembly, the system is composed of three essential subunits: KdpA, KdpB and KdpC.

The protein localises to the cell inner membrane. The enzyme catalyses K(+)(out) + ATP + H2O = K(+)(in) + ADP + phosphate + H(+). Functionally, part of the high-affinity ATP-driven potassium transport (or Kdp) system, which catalyzes the hydrolysis of ATP coupled with the electrogenic transport of potassium into the cytoplasm. This subunit is responsible for energy coupling to the transport system and for the release of the potassium ions to the cytoplasm. The chain is Potassium-transporting ATPase ATP-binding subunit 2 from Nostoc sp. (strain PCC 7120 / SAG 25.82 / UTEX 2576).